A 189-amino-acid polypeptide reads, in one-letter code: Small ribosomal subunit protein uS7 (189 aa).

This sequence belongs to the universal ribosomal protein uS7 family. Part of the 30S ribosomal subunit.

In terms of biological role, one of the primary rRNA binding proteins, it binds directly to 16S rRNA where it nucleates assembly of the head domain of the 30S subunit. Is located at the subunit interface close to the decoding center. This chain is Small ribosomal subunit protein uS7, found in Methanosarcina acetivorans (strain ATCC 35395 / DSM 2834 / JCM 12185 / C2A).